A 210-amino-acid polypeptide reads, in one-letter code: ATP-dependent Clp protease proteolytic subunit (210 aa).

Residue serine 106 is the Nucleophile of the active site. Histidine 131 is a catalytic residue.

The protein belongs to the peptidase S14 family. Fourteen ClpP subunits assemble into 2 heptameric rings which stack back to back to give a disk-like structure with a central cavity, resembling the structure of eukaryotic proteasomes.

It localises to the cytoplasm. The catalysed reaction is Hydrolysis of proteins to small peptides in the presence of ATP and magnesium. alpha-casein is the usual test substrate. In the absence of ATP, only oligopeptides shorter than five residues are hydrolyzed (such as succinyl-Leu-Tyr-|-NHMec, and Leu-Tyr-Leu-|-Tyr-Trp, in which cleavage of the -Tyr-|-Leu- and -Tyr-|-Trp bonds also occurs).. Functionally, cleaves peptides in various proteins in a process that requires ATP hydrolysis. Has a chymotrypsin-like activity. Plays a major role in the degradation of misfolded proteins. The sequence is that of ATP-dependent Clp protease proteolytic subunit from Rhodopseudomonas palustris (strain BisB18).